Here is a 256-residue protein sequence, read N- to C-terminus: Hydroxyethylthiazole kinase (256 aa).

A substrate-binding site is contributed by methionine 38. 2 residues coordinate ATP: arginine 114 and threonine 159. Glycine 186 is a substrate binding site.

Belongs to the Thz kinase family. The cofactor is Mg(2+).

It carries out the reaction 5-(2-hydroxyethyl)-4-methylthiazole + ATP = 4-methyl-5-(2-phosphooxyethyl)-thiazole + ADP + H(+). Its pathway is cofactor biosynthesis; thiamine diphosphate biosynthesis; 4-methyl-5-(2-phosphoethyl)-thiazole from 5-(2-hydroxyethyl)-4-methylthiazole: step 1/1. Its function is as follows. Catalyzes the phosphorylation of the hydroxyl group of 4-methyl-5-beta-hydroxyethylthiazole (THZ). The sequence is that of Hydroxyethylthiazole kinase from Streptococcus agalactiae serotype III (strain NEM316).